Consider the following 427-residue polypeptide: Piwi protein (427 aa).

The interval 38 to 167 (PYEVPSLKYN…VQFVSKLGGK (130 aa)) is mid domain. Positions 110–406 (GIMLVLPEYN…VAGIIANVNR (297 aa)) constitute a Piwi domain. The tract at residues 118 to 124 (YNTPLYY) is binds 5'-phosphorylated end of guide DNA. Residues 147–148 (RN) form a binds target DNA region. The interval 150–155 (TFYVDN) is binds guide DNA. A divalent metal cation is bound by residues Gln-159 and Leu-427. A PIWI domain region spans residues 168-427 (PWILNVDPEK…RSLQTNPWFL (260 aa)).

The protein belongs to the argonaute family. Short pAgo subfamily. Homodimer probably stabilized by DNA. Each subunit is capable of interacting with a DNA molecule. The cofactor is a divalent metal cation.

Might play a role in defense against invading genetic elements, using short nucleic acid sequences as guides to bind complementary target strands, resulting in slicing of the target nucleic acid. Binds nucleic acids with decreasing affinity in the following order; ssDNA, ssRNA, dsDNA, RNA-DNA, RNA-RNA. Association of the 5' seed region of the guide strand (nucleotides 2-7) with AfPiwi increases affinity for the corresponding target strand; the greatest increase in affinity is for guide DNA with target RNA. This Archaeoglobus fulgidus (strain ATCC 49558 / DSM 4304 / JCM 9628 / NBRC 100126 / VC-16) protein is Piwi protein.